Here is a 293-residue protein sequence, read N- to C-terminus: Acetylglutamate kinase (293 aa).

Substrate-binding positions include 65–66 (GG), Arg-87, and Asn-188.

This sequence belongs to the acetylglutamate kinase family. ArgB subfamily.

Its subcellular location is the cytoplasm. It catalyses the reaction N-acetyl-L-glutamate + ATP = N-acetyl-L-glutamyl 5-phosphate + ADP. It functions in the pathway amino-acid biosynthesis; L-arginine biosynthesis; N(2)-acetyl-L-ornithine from L-glutamate: step 2/4. Its function is as follows. Catalyzes the ATP-dependent phosphorylation of N-acetyl-L-glutamate. This is Acetylglutamate kinase from Symbiobacterium thermophilum (strain DSM 24528 / JCM 14929 / IAM 14863 / T).